A 317-amino-acid polypeptide reads, in one-letter code: Acetyl-coenzyme A carboxylase carboxyl transferase subunit alpha (317 aa).

The CoA carboxyltransferase C-terminal domain maps to 39 to 293 (KLEAKAQKAL…KEAVVEALGA (255 aa)).

The protein belongs to the AccA family. In terms of assembly, acetyl-CoA carboxylase is a heterohexamer composed of biotin carboxyl carrier protein (AccB), biotin carboxylase (AccC) and two subunits each of ACCase subunit alpha (AccA) and ACCase subunit beta (AccD).

The protein localises to the cytoplasm. The enzyme catalyses N(6)-carboxybiotinyl-L-lysyl-[protein] + acetyl-CoA = N(6)-biotinyl-L-lysyl-[protein] + malonyl-CoA. Its pathway is lipid metabolism; malonyl-CoA biosynthesis; malonyl-CoA from acetyl-CoA: step 1/1. Its function is as follows. Component of the acetyl coenzyme A carboxylase (ACC) complex. First, biotin carboxylase catalyzes the carboxylation of biotin on its carrier protein (BCCP) and then the CO(2) group is transferred by the carboxyltransferase to acetyl-CoA to form malonyl-CoA. In Beijerinckia indica subsp. indica (strain ATCC 9039 / DSM 1715 / NCIMB 8712), this protein is Acetyl-coenzyme A carboxylase carboxyl transferase subunit alpha.